Here is a 133-residue protein sequence, read N- to C-terminus: Cytidine deaminase (133 aa).

Positions 4–126 (VDWNMLRGNA…DLLPDAFGLD (123 aa)) constitute a CMP/dCMP-type deaminase domain. A substrate-binding site is contributed by 45 to 47 (NVE). Cys56 contacts Zn(2+). Residue Glu58 is the Proton donor of the active site. Zn(2+)-binding residues include Cys89 and Cys92.

Belongs to the cytidine and deoxycytidylate deaminase family. In terms of assembly, homotetramer. Zn(2+) is required as a cofactor.

The enzyme catalyses cytidine + H2O + H(+) = uridine + NH4(+). It catalyses the reaction 2'-deoxycytidine + H2O + H(+) = 2'-deoxyuridine + NH4(+). In terms of biological role, recycles cytidine and 2-deoxycytidine for uridine and 2-deoxyuridine synthesis, respectively. Catalyzes the hydrolytic deamination of cytidine and 2-deoxycytidine to form, respectively, uridine and 2-deoxyuridine. In Mycobacterium tuberculosis (strain CDC 1551 / Oshkosh), this protein is Cytidine deaminase (cdd).